A 528-amino-acid polypeptide reads, in one-letter code: GMP synthase [glutamine-hydrolyzing] (528 aa).

A Glutamine amidotransferase type-1 domain is found at Ala-22–Asn-212. Catalysis depends on Cys-99, which acts as the Nucleophile. Catalysis depends on residues His-186 and Glu-188. Positions Trp-213–Arg-403 constitute a GMPS ATP-PPase domain. An ATP-binding site is contributed by Ser-240 to Leu-246.

As to quaternary structure, homodimer.

The catalysed reaction is XMP + L-glutamine + ATP + H2O = GMP + L-glutamate + AMP + diphosphate + 2 H(+). Its pathway is purine metabolism; GMP biosynthesis; GMP from XMP (L-Gln route): step 1/1. Catalyzes the synthesis of GMP from XMP. The protein is GMP synthase [glutamine-hydrolyzing] of Borrelia garinii subsp. bavariensis (strain ATCC BAA-2496 / DSM 23469 / PBi) (Borreliella bavariensis).